The primary structure comprises 251 residues: tRNA (guanine-N(7)-)-methyltransferase (251 aa).

A disordered region spans residues 1-43 (MQPNEQPGTGPADTTLEQQDTAAAEVGHPRRIRSFVRRAGRTS). Residues 29 to 40 (PRRIRSFVRRAG) are compositionally biased toward basic residues. 4 residues coordinate S-adenosyl-L-methionine: E82, E107, D134, and D157. The active site involves D157. Position 161 (K161) interacts with substrate. The interaction with RNA stretch occupies residues 163-168 (RHNKRR). Residues D193 and 228–231 (TKFE) each bind substrate.

This sequence belongs to the class I-like SAM-binding methyltransferase superfamily. TrmB family.

The catalysed reaction is guanosine(46) in tRNA + S-adenosyl-L-methionine = N(7)-methylguanosine(46) in tRNA + S-adenosyl-L-homocysteine. It functions in the pathway tRNA modification; N(7)-methylguanine-tRNA biosynthesis. Functionally, catalyzes the formation of N(7)-methylguanine at position 46 (m7G46) in tRNA. The polypeptide is tRNA (guanine-N(7)-)-methyltransferase (Ralstonia nicotianae (strain ATCC BAA-1114 / GMI1000) (Ralstonia solanacearum)).